The following is a 193-amino-acid chain: AP-3 complex subunit sigma-2 (193 aa).

The protein belongs to the adaptor complexes small subunit family. Adaptor protein complex 3 (AP-3) is a heterotetramer composed of two large adaptins (delta-type subunit AP3D1 and beta-type subunit AP3B1 or AP3B2), a medium adaptin (mu-type subunit AP3M1 or AP3M2) and a small adaptin (sigma-type subunit APS1 or AP3S2). Interacts with AGAP1. AP-3 associates with the BLOC-1 complex. As to expression, present in all adult tissues examined.

It localises to the golgi apparatus. It is found in the cytoplasmic vesicle membrane. Part of the AP-3 complex, an adaptor-related complex which is not clathrin-associated. The complex is associated with the Golgi region as well as more peripheral structures. It facilitates the budding of vesicles from the Golgi membrane and may be directly involved in trafficking to lysosomes. In concert with the BLOC-1 complex, AP-3 is required to target cargos into vesicles assembled at cell bodies for delivery into neurites and nerve terminals. This is AP-3 complex subunit sigma-2 (AP3S2) from Homo sapiens (Human).